A 362-amino-acid polypeptide reads, in one-letter code: Phosphoserine aminotransferase (362 aa).

L-glutamate contacts are provided by Ser-9 and Arg-42. Pyridoxal 5'-phosphate is bound by residues 76-77 (GR), Trp-102, Thr-153, Asp-174, and Gln-197. An N6-(pyridoxal phosphate)lysine modification is found at Lys-198. 239–240 (NT) contacts pyridoxal 5'-phosphate.

It belongs to the class-V pyridoxal-phosphate-dependent aminotransferase family. SerC subfamily. In terms of assembly, homodimer. It depends on pyridoxal 5'-phosphate as a cofactor.

Its subcellular location is the cytoplasm. The catalysed reaction is O-phospho-L-serine + 2-oxoglutarate = 3-phosphooxypyruvate + L-glutamate. The enzyme catalyses 4-(phosphooxy)-L-threonine + 2-oxoglutarate = (R)-3-hydroxy-2-oxo-4-phosphooxybutanoate + L-glutamate. Its pathway is amino-acid biosynthesis; L-serine biosynthesis; L-serine from 3-phospho-D-glycerate: step 2/3. The protein operates within cofactor biosynthesis; pyridoxine 5'-phosphate biosynthesis; pyridoxine 5'-phosphate from D-erythrose 4-phosphate: step 3/5. Its function is as follows. Catalyzes the reversible conversion of 3-phosphohydroxypyruvate to phosphoserine and of 3-hydroxy-2-oxo-4-phosphonooxybutanoate to phosphohydroxythreonine. The chain is Phosphoserine aminotransferase from Citrobacter koseri (strain ATCC BAA-895 / CDC 4225-83 / SGSC4696).